The chain runs to 428 residues: 3-phosphoshikimate 1-carboxyvinyltransferase (428 aa).

3-phosphoshikimate is bound by residues Lys23, Ser24, and Arg28. Lys23 contributes to the phosphoenolpyruvate binding site. The phosphoenolpyruvate site is built by Gly97 and Arg125. Residues Ser170, Ser171, Gln172, Ser198, Asp314, Asn337, and Lys341 each coordinate 3-phosphoshikimate. Position 172 (Gln172) interacts with phosphoenolpyruvate. The Proton acceptor role is filled by Asp314. The phosphoenolpyruvate site is built by Arg345, Arg387, and Lys412.

Belongs to the EPSP synthase family. As to quaternary structure, monomer.

Its subcellular location is the cytoplasm. It carries out the reaction 3-phosphoshikimate + phosphoenolpyruvate = 5-O-(1-carboxyvinyl)-3-phosphoshikimate + phosphate. It participates in metabolic intermediate biosynthesis; chorismate biosynthesis; chorismate from D-erythrose 4-phosphate and phosphoenolpyruvate: step 6/7. In terms of biological role, catalyzes the transfer of the enolpyruvyl moiety of phosphoenolpyruvate (PEP) to the 5-hydroxyl of shikimate-3-phosphate (S3P) to produce enolpyruvyl shikimate-3-phosphate and inorganic phosphate. In Buchnera aphidicola subsp. Schizaphis graminum (strain Sg), this protein is 3-phosphoshikimate 1-carboxyvinyltransferase.